Here is a 498-residue protein sequence, read N- to C-terminus: Glycerol kinase (498 aa).

Threonine 12 serves as a coordination point for ADP. Residues threonine 12, threonine 13, and serine 14 each coordinate ATP. A sn-glycerol 3-phosphate-binding site is contributed by threonine 12. ADP is bound at residue arginine 16. 4 residues coordinate sn-glycerol 3-phosphate: arginine 82, glutamate 83, tyrosine 134, and aspartate 243. Positions 82, 83, 134, 243, and 244 each coordinate glycerol. The ADP site is built by threonine 265 and glycine 308. ATP is bound by residues threonine 265, glycine 308, glutamine 312, and glycine 412. Glycine 412 lines the ADP pocket.

Belongs to the FGGY kinase family.

It catalyses the reaction glycerol + ATP = sn-glycerol 3-phosphate + ADP + H(+). Its pathway is polyol metabolism; glycerol degradation via glycerol kinase pathway; sn-glycerol 3-phosphate from glycerol: step 1/1. With respect to regulation, inhibited by fructose 1,6-bisphosphate (FBP). Key enzyme in the regulation of glycerol uptake and metabolism. Catalyzes the phosphorylation of glycerol to yield sn-glycerol 3-phosphate. This chain is Glycerol kinase, found in Rhizobium rhizogenes (strain K84 / ATCC BAA-868) (Agrobacterium radiobacter).